We begin with the raw amino-acid sequence, 711 residues long: Phosphate acetyltransferase (711 aa).

Residues 390–711 form a phosphate acetyltransferase region; it reads AFRFQLTELA…IALTAIQATQ (322 aa).

This sequence in the N-terminal section; belongs to the CobB/CobQ family. It in the C-terminal section; belongs to the phosphate acetyltransferase and butyryltransferase family. As to quaternary structure, homohexamer.

The protein localises to the cytoplasm. It catalyses the reaction acetyl-CoA + phosphate = acetyl phosphate + CoA. It functions in the pathway metabolic intermediate biosynthesis; acetyl-CoA biosynthesis; acetyl-CoA from acetate: step 2/2. Functionally, involved in acetate metabolism. The chain is Phosphate acetyltransferase (pta) from Haemophilus influenzae (strain ATCC 51907 / DSM 11121 / KW20 / Rd).